Reading from the N-terminus, the 589-residue chain is Vesicular glutamate transporter 3 (589 aa).

Topologically, residues Met-1–Tyr-76 are cytoplasmic. Acidic residues predominate over residues Thr-40–Asn-49. The interval Thr-40–Ser-61 is disordered. A helical transmembrane segment spans residues Ile-77–Gly-97. Residues Val-98 to Gly-130 lie on the Vesicular side of the membrane. N-linked (GlcNAc...) asparagine glycosylation is present at Asn-106. A helical membrane pass occupies residues Leu-131–Ser-151. Residues Asn-152–Lys-153 lie on the Cytoplasmic side of the membrane. The chain crosses the membrane as a helical span at residues Phe-154–Ile-174. Residues Pro-175 to Tyr-182 lie on the Vesicular side of the membrane. The helical transmembrane segment at Gly-183–Cys-203 threads the bilayer. Topologically, residues His-204 to Thr-221 are cytoplasmic. Residues Thr-222–Val-242 traverse the membrane as a helical segment. The Vesicular portion of the chain corresponds to Gln-243–Ser-249. A helical membrane pass occupies residues Val-250 to Tyr-270. The Cytoplasmic portion of the chain corresponds to Glu-271–Leu-314. Residues Pro-315–Ile-335 form a helical membrane-spanning segment. Over Ser-336–Gly-353 the chain is Vesicular. Residues Leu-354–Ala-374 traverse the membrane as a helical segment. Residues Asp-375–Lys-390 are Cytoplasmic-facing. A helical transmembrane segment spans residues Ile-391–His-411. The Vesicular portion of the chain corresponds to Thr-412–Lys-413. The chain crosses the membrane as a helical span at residues Gly-414–Phe-434. At Asn-435–Ser-447 the chain is on the cytoplasmic side. The chain crosses the membrane as a helical span at residues Ile-448 to Val-468. The Vesicular portion of the chain corresponds to Gly-469 to Gln-481. The chain crosses the membrane as a helical span at residues Asn-482–Ala-502. The Cytoplasmic portion of the chain corresponds to Ser-503–Ser-586. Residues Lys-559–Ser-589 form a disordered region. Residues Asn-580–Ser-589 show a composition bias toward basic and acidic residues.

The protein belongs to the major facilitator superfamily. Sodium/anion cotransporter family. VGLUT subfamily. In terms of tissue distribution, expressed in amygdala, cerebellum, hippocampus, medulla, spinal cord and thalamus.

The protein localises to the cytoplasmic vesicle. It is found in the secretory vesicle. It localises to the synaptic vesicle membrane. The protein resides in the cell membrane. Its subcellular location is the synapse. The protein localises to the synaptosome. The enzyme catalyses L-glutamate(out) = L-glutamate(in). It carries out the reaction 3 Na(+)(out) + phosphate(out) = 3 Na(+)(in) + phosphate(in). It catalyses the reaction chloride(in) = chloride(out). The L-glutamate uniporter activity exhibits a biphasic dependence on chloride concentration. Chloride channel activity is allosterically activated by lumenal H(+) and Cl(-) leading to synaptic vesicles acidification. The glutamate transport activity is allosterically activated by lumenal H(+) and Cl(-), preventing non-vesicular L-glutamate release. Multifunctional transporter that transports L-glutamate as well as multiple ions such as chloride, sodium and phosphate. At the synaptic vesicle membrane, mainly functions as an uniporter that mediates the uptake of L-glutamate into synaptic vesicles at presynaptic nerve terminals of excitatory neural cells. The L-glutamate uniporter activity is electrogenic and is driven by the proton electrochemical gradient, mainly by the electrical gradient established by the vacuolar H(+)-ATPase across the synaptic vesicle membrane. In addition, functions as a chloride channel that allows a chloride permeation through the synaptic vesicle membrane that affects the proton electrochemical gradient and promotes synaptic vesicles acidification. At the plasma membrane, following exocytosis, functions as a symporter of Na(+) and phosphate from the extracellular space to the cytoplasm allowing synaptic phosphate homeostasis regulation. The symporter activity is electrogenic. Moreover, operates synergistically with SLC18A3/VACHT under a constant H(+) gradient, thereby allowing striatal vesicular acetylcholine uptake. The sequence is that of Vesicular glutamate transporter 3 from Homo sapiens (Human).